An 86-amino-acid polypeptide reads, in one-letter code: Large ribosomal subunit protein bL27 (86 aa).

A disordered region spans residues 1 to 26 (MAHKKAAGSTRNGRDSESKRLGVKRY).

This sequence belongs to the bacterial ribosomal protein bL27 family.

This chain is Large ribosomal subunit protein bL27, found in Marinobacter nauticus (strain ATCC 700491 / DSM 11845 / VT8) (Marinobacter aquaeolei).